The primary structure comprises 526 residues: Bifunctional purine biosynthesis protein PurH (526 aa).

The region spanning 1 to 147 (MSSIKRALIS…KNWKHVAIVT (147 aa)) is the MGS-like domain.

This sequence belongs to the PurH family.

The enzyme catalyses (6R)-10-formyltetrahydrofolate + 5-amino-1-(5-phospho-beta-D-ribosyl)imidazole-4-carboxamide = 5-formamido-1-(5-phospho-D-ribosyl)imidazole-4-carboxamide + (6S)-5,6,7,8-tetrahydrofolate. It catalyses the reaction IMP + H2O = 5-formamido-1-(5-phospho-D-ribosyl)imidazole-4-carboxamide. The protein operates within purine metabolism; IMP biosynthesis via de novo pathway; 5-formamido-1-(5-phospho-D-ribosyl)imidazole-4-carboxamide from 5-amino-1-(5-phospho-D-ribosyl)imidazole-4-carboxamide (10-formyl THF route): step 1/1. Its pathway is purine metabolism; IMP biosynthesis via de novo pathway; IMP from 5-formamido-1-(5-phospho-D-ribosyl)imidazole-4-carboxamide: step 1/1. The chain is Bifunctional purine biosynthesis protein PurH from Neisseria meningitidis serogroup B (strain ATCC BAA-335 / MC58).